Here is a 289-residue protein sequence, read N- to C-terminus: Transmembrane protein 163 (289 aa).

The tract at residues 1–65 is disordered; that stretch reads MEPAAGIQRR…ESGQFSDGLE (65 aa). At 1–88 the chain is on the cytoplasmic side; that stretch reads MEPAAGIQRR…HEAQNYRKKA (88 aa). S11 carries the phosphoserine modification. Residues 16 to 36 are compositionally biased toward pro residues; it reads TVPPPPRGHAPPAAAPGPAPL. Residues 42–72 form a required for interaction with MCOLN1 region; it reads EPPQLEEERQVRISESGQFSDGLEDRGLLES. Residues S55, S57, and S61 each carry the phosphoserine modification. Residues 89 to 109 traverse the membrane as a helical segment; the sequence is LWVSWFSIIVTLALAVAAFTV. Over 110 to 116 the chain is Extracellular; the sequence is SVMRYSA. Residues 117-137 form a helical membrane-spanning segment; that stretch reads SAFGFAFDAILDVLSSAIVLW. Topologically, residues 138–150 are cytoplasmic; that stretch reads RYSNAAAVHSAHR. A helical membrane pass occupies residues 151–171; it reads EYIACVILGVIFLLSSICIVV. Topologically, residues 172–187 are extracellular; it reads KAIHDLSTRLLPEVDD. The helical transmembrane segment at 188–208 threads the bilayer; the sequence is FLFSVSILSGILCSILAVLKF. The Cytoplasmic portion of the chain corresponds to 209–217; it reads MLGKVLTSR. Residues 218-238 traverse the membrane as a helical segment; sequence ALITDGFNSLVGGVMGFSILL. Residues 239–255 lie on the Extracellular side of the membrane; that stretch reads SAEVFKHDSAVWYLDGS. The helical transmembrane segment at 256 to 276 threads the bilayer; it reads IGVLIGLTIFAYGVKLLIDMV. The Cytoplasmic portion of the chain corresponds to 277-289; it reads PRVRQTRHYEMFE.

Belongs to the TMEM163 family. Homodimer. Interacts with MCOLN1/TRPML1. Interacts with SLC30A1, SLC30A2, SLC30A3 and SLC30A4. Widely expressed. High expression is detected in brain, lung and testis.

Its subcellular location is the cytoplasmic vesicle. The protein localises to the secretory vesicle. The protein resides in the synaptic vesicle membrane. It is found in the early endosome membrane. It localises to the late endosome membrane. Its subcellular location is the lysosome membrane. The protein localises to the cell membrane. The catalysed reaction is Zn(2+)(in) = Zn(2+)(out). Functionally, zinc ion transporter that mediates zinc efflux and plays a crucial role in intracellular zinc homeostasis. Binds the divalent cations Zn(2+), Ni(2+), and to a minor extent Cu(2+). Is a functional modulator of P2X purinoceptors, including P2RX1, P2RX3, P2RX4 and P2RX7. Plays a role in central nervous system development and is required for myelination, and survival and proliferation of oligodendrocytes. The sequence is that of Transmembrane protein 163 (TMEM163) from Homo sapiens (Human).